A 59-amino-acid polypeptide reads, in one-letter code: Small integral membrane protein 30 (59 aa).

The first 24 residues, 1-24 (MTSVSTQLSLVLMSLLLVLPVVEA), serve as a signal peptide directing secretion. Residues 25-29 (VEAGD) lie on the Extracellular side of the membrane. The chain crosses the membrane as a helical span at residues 30–50 (AIALLLGVVLSITGICACLGV). Over 51-59 (YARKRNGQM) the chain is Cytoplasmic.

In terms of assembly, interacts (via transmembrane domain) with antiviral protein MAVS (via transmembrane domain); the interaction disrupts MAVS interaction with RIGI and inhibits MAVS aggregation, resulting in the repression of type I interferon signaling and innate immune responses.

The protein localises to the endoplasmic reticulum membrane. It localises to the mitochondrion membrane. Functionally, negatively regulates antiviral innate immune responses. Disrupts the interaction of antiviral protein MAVS with innate immune receptor RIGI and inhibits MAVS aggregation, resulting in the repression of type I interferon signaling and innate immune responses. This chain is Small integral membrane protein 30, found in Homo sapiens (Human).